We begin with the raw amino-acid sequence, 418 residues long: Intracellular coagulation inhibitor 1 (418 aa).

The N-terminal stretch at 1–24 (MKLGDWKFCLLLFQLMFLTNVCLS) is a signal peptide. 2 N-linked (GlcNAc...) asparagine glycosylation sites follow: N49 and N404.

The protein belongs to the serpin family. Monomer. Forms a covalent heterodimer with clotting factor C. Interacts with big defensin. N-glycosylated. As to expression, expressed in hemocytes (at protein level).

The protein localises to the secreted. Serine protease inhibitor that specifically inhibits clotting factor C. Does not inhibit clotting factor B or proclotting enzyme. This is Intracellular coagulation inhibitor 1 from Tachypleus tridentatus (Japanese horseshoe crab).